We begin with the raw amino-acid sequence, 329 residues long: GTP 3',8-cyclase (329 aa).

The region spanning 8-234 is the Radical SAM core domain; the sequence is AFARKFYYLR…QLRQRSDGPA (227 aa). Arg17 serves as a coordination point for GTP. The [4Fe-4S] cluster site is built by Cys24 and Cys28. Tyr30 contacts S-adenosyl-L-methionine. Cys31 lines the [4Fe-4S] cluster pocket. Residue Arg68 coordinates GTP. Gly72 is a binding site for S-adenosyl-L-methionine. Thr99 serves as a coordination point for GTP. Ser123 provides a ligand contact to S-adenosyl-L-methionine. Lys160 lines the GTP pocket. Residue Met194 coordinates S-adenosyl-L-methionine. Positions 257 and 260 each coordinate [4Fe-4S] cluster. 262 to 264 is a GTP binding site; sequence RLR. Position 274 (Cys274) interacts with [4Fe-4S] cluster.

Belongs to the radical SAM superfamily. MoaA family. As to quaternary structure, monomer and homodimer. The cofactor is [4Fe-4S] cluster.

It catalyses the reaction GTP + AH2 + S-adenosyl-L-methionine = (8S)-3',8-cyclo-7,8-dihydroguanosine 5'-triphosphate + 5'-deoxyadenosine + L-methionine + A + H(+). Its pathway is cofactor biosynthesis; molybdopterin biosynthesis. Catalyzes the cyclization of GTP to (8S)-3',8-cyclo-7,8-dihydroguanosine 5'-triphosphate. The polypeptide is GTP 3',8-cyclase (Shigella boydii serotype 18 (strain CDC 3083-94 / BS512)).